We begin with the raw amino-acid sequence, 226 residues long: Probable endolytic peptidoglycan transglycosylase RlpA (226 aa).

Positions 1–26 are cleaved as a signal peptide; sequence MERFLGFRTPLGALGVVILLTLILSS. Residue cysteine 27 is the site of N-palmitoyl cysteine attachment. A lipid anchor (S-diacylglycerol cysteine) is attached at cysteine 27.

This sequence belongs to the RlpA family.

The protein resides in the cell membrane. Its function is as follows. Lytic transglycosylase with a strong preference for naked glycan strands that lack stem peptides. The protein is Probable endolytic peptidoglycan transglycosylase RlpA of Aquifex aeolicus (strain VF5).